A 169-amino-acid polypeptide reads, in one-letter code: Interleukin-36 gamma (169 aa).

A propeptide spanning residues 1–17 (MRGTPGDADGGGRAVYQ) is cleaved from the precursor.

It belongs to the IL-1 family. Interacts with cargo receptor TMED10; the interaction mediates the translocation from the cytoplasm into the ERGIC (endoplasmic reticulum-Golgi intermediate compartment) and thereby secretion. In terms of processing, N-terminal truncation leads to a dramatic enhancement of its activity (&gt;1000-fold). Proteolytically cleaved by cathepsin CTSG. In terms of tissue distribution, highly expressed in tissues containing epithelial cells: skin, lung, stomach and esophagus. Expressed in bronchial epithelial. In skin is expressed only in keratinocytes but not in fibroblasts, endothelial cells or melanocytes. Up-regulated in lesional psoriasis skin. Expressed in monocyte-derived dendritic cells and M1 macrophages.

It is found in the cytoplasm. The protein resides in the secreted. Cytokine that binds to and signals through the IL1RL2/IL-36R receptor which in turn activates NF-kappa-B and MAPK signaling pathways in target cells. Part of the IL-36 signaling system that is thought to be present in epithelial barriers and to take part in local inflammatory response; similar to the IL-1 system with which it shares the coreceptor IL1RAP. Seems to be involved in skin inflammatory response by acting on keratinocytes, dendritic cells and indirectly on T-cells to drive tissue infiltration, cell maturation and cell proliferation. In cultured keratinocytes induces the expression of macrophage, T-cell, and neutrophil chemokines, such as CCL3, CCL4, CCL5, CCL2, CCL17, CCL22, CL20, CCL5, CCL2, CCL17, CCL22, CXCL8, CCL20 and CXCL1; also stimulates its own expression and that of the prototypic cutaneous pro-inflammatory parameters TNF-alpha, S100A7/psoriasin and inducible NOS. May play a role in pro-inflammatory responses during particular neutrophilic airway inflammation: activates mitogen-activated protein kinases and NF-kappa B in primary lung fibroblasts, and stimulates the expression of IL-8 and CXCL3 and Th17 chemokine CCL20 in lung fibroblasts. May be involved in the innate immune response to fungal pathogens, such as Aspergillus fumigatus. In Homo sapiens (Human), this protein is Interleukin-36 gamma.